We begin with the raw amino-acid sequence, 419 residues long: MDKFRVQGPTKLQGEVTISGAKNAALPNLFAALLAEEPVEIQNVPKLKDVDTSMKLLSQLGAKVERNGSVHIDARDVNVFCAPYDLVKTMRASIWALGPLVARFGQGQVSLPGGCTIGARPVDLHISGLEQLGATIKLEEGYVKASVDGRLKGAHIVMDKVSVGATVTIMCAATLAEGTTIIENAAREPEIVDTANFLITLGAKISGQGTDRIVIEGVERLGGGVYRVLPDRIETGTFLVAAAISRGKIICRNAQPDTLDAVLAKLRDAGADIEVGEDWISLDMHGKRPKAVNVRTAPHPAFPTDMQAQFTLLNLVAEGTGFITETVFENRFMHVPELSRMGAHAEIESNTVICHGVEKLSGAQVMATDLRASASLVLAGCIAEGTTVVDRIYHIDRGYERIEDKLRALGANIERVKGE.

22–23 (KN) lines the phosphoenolpyruvate pocket. Arg-91 contacts UDP-N-acetyl-alpha-D-glucosamine. Cys-115 serves as the catalytic Proton donor. Cys-115 carries the post-translational modification 2-(S-cysteinyl)pyruvic acid O-phosphothioketal. UDP-N-acetyl-alpha-D-glucosamine is bound by residues 120–124 (RPVDL), 160–163 (KVSV), Asp-305, and Val-327.

It belongs to the EPSP synthase family. MurA subfamily.

The protein resides in the cytoplasm. It carries out the reaction phosphoenolpyruvate + UDP-N-acetyl-alpha-D-glucosamine = UDP-N-acetyl-3-O-(1-carboxyvinyl)-alpha-D-glucosamine + phosphate. Its pathway is cell wall biogenesis; peptidoglycan biosynthesis. In terms of biological role, cell wall formation. Adds enolpyruvyl to UDP-N-acetylglucosamine. The sequence is that of UDP-N-acetylglucosamine 1-carboxyvinyltransferase from Escherichia coli (strain K12 / MC4100 / BW2952).